A 301-amino-acid polypeptide reads, in one-letter code: Phosphate transport system permease protein PstA 2 (301 aa).

A run of 6 helical transmembrane segments spans residues 36–56 (ACVC…IGVV), 83–103 (IIGT…VSVL), 127–147 (LSGI…VVYF), 149–169 (WGFS…PYIA), 209–229 (GIVT…APLL), and 274–294 (ALLL…INWL). Residues 83–288 (IIGTAVLAIG…VFLLLLIFIG (206 aa)) form the ABC transmembrane type-1 domain.

It belongs to the binding-protein-dependent transport system permease family. CysTW subfamily.

Its subcellular location is the cell membrane. In terms of biological role, part of the binding-protein-dependent transport system for phosphate; probably responsible for the translocation of the substrate across the membrane. The polypeptide is Phosphate transport system permease protein PstA 2 (pstA2) (Mycobacterium bovis (strain ATCC BAA-935 / AF2122/97)).